The following is a 545-amino-acid chain: MATLQGQPVLILREGTQRTVGRDAQRMNIMAARVIAEAVRSTLGPKGMDKMLVDSLGDVVITNDGVTILKEIDVEHPAAKMIIEVAKTQDNEVGDGTTTAVVLAGELLKRAEELLDQEIHPAIIANGYRYAAEKALEILNEIAIPISKDDDEILKKIATTAMTGKGAEVAIDKLAEIAVNAVKMIAEESNGQVEVNTDYIKIEKRQGGSIEETELVDGIVLDKEVVHPGMPKRVENAKILLLDSALEVKETEIDAKIRITDPEKLQKFIEQEEAMLKEMVDKIVNAGANVVFCQKGIDDLAQYYLAKAGVLAVRRVKKSDMEKLAKATGAKVLTDLRDISSEDLGEAALVEERKVGDEKMVFVTGCKNPKAVTILVRGGTEHVVEEIARGIEDAVRAVACAVEDGKVVVGAGAPEIEVSLKLREWAPSLGGREQLAVEAFATALEIIPRTLAENAGLDPIDVLVELKAAHEKGQKYAGVDVDTGKVVDMKERGVFEPLRVKTQAIGSATEVAVMILRIDDIIAAKGLEKEKGGGGEGGMPEMPEF.

Belongs to the TCP-1 chaperonin family. Forms a Heterooligomeric complex of two stacked eight-membered rings.

In terms of biological role, molecular chaperone; binds unfolded polypeptides in vitro, and has a weak ATPase activity. The protein is Thermosome subunit beta (thsB) of Archaeoglobus fulgidus (strain ATCC 49558 / DSM 4304 / JCM 9628 / NBRC 100126 / VC-16).